Here is a 122-residue protein sequence, read N- to C-terminus: Small ribosomal subunit protein uS13 (122 aa).

Over residues Pro-97–Ser-114 the composition is skewed to basic residues. The segment at Pro-97–Glu-122 is disordered.

Belongs to the universal ribosomal protein uS13 family. As to quaternary structure, part of the 30S ribosomal subunit. Forms a loose heterodimer with protein S19. Forms two bridges to the 50S subunit in the 70S ribosome.

Its function is as follows. Located at the top of the head of the 30S subunit, it contacts several helices of the 16S rRNA. In the 70S ribosome it contacts the 23S rRNA (bridge B1a) and protein L5 of the 50S subunit (bridge B1b), connecting the 2 subunits; these bridges are implicated in subunit movement. Contacts the tRNAs in the A and P-sites. The sequence is that of Small ribosomal subunit protein uS13 from Wolbachia sp. subsp. Brugia malayi (strain TRS).